The following is a 673-amino-acid chain: MRRVRGVGNLLVTILVVLIGFKQARKYCESNEAEFCRLTSLSRASPWWNEHIDPYWDSYVSPCVTKIHDYEHKLDEWAAPRIDRAYYQVQDIVETKVVPVTYKWYKTVQFKTQVYYNGHFVPFLGHARILAKQWLASEGFFQRLYLHVQQGLFCLRNWSLWVWNGSLEAFNEIHSWSGHALQEISNKFSVTENQSGEPVTDEDPSDTDESKYYDAEYFEGEQGDYNEDDETVYLTSTIIETVTLSDEKQLDKSTSAANGDDGSSLDVPLRDLVQDEFQAWSNTVEQKASNTLTQFDSEVEELVEAKLSKAQPNITGLLQGISESFQSHYRIINRAILDVDCTMELDPETGEQLYFNKDGTQLRKYVTRPLMREFFSSAHAHVDERLEMVRARLEKFVAAVNKEVEQVRQEHLEVYEEWGDVMVSEWSKRMAYVDVVAAMGAEDMNQQQHDNWKRFLKLKKQVVNTRDLLMQHPAKLERLQKFLNDIQFTLMALQRDAGEYLFILRSQANIAFQTREKLEREREEEERRKLEQERQIQEQKEREQQELAENEARAARERLALEQGQGQEQLEQNSDEAFFSMEDITATPLGADDNTDYENALDDADSQLSESGDSEDNFYDSYEGDEEDASRELERLERESAERETLDRLELGQRQKLQEEQHRDELHHSSQAN.

A signal peptide spans 1–24 (MRRVRGVGNLLVTILVVLIGFKQA). Residues 503–568 (ILRSQANIAF…LALEQGQGQE (66 aa)) adopt a coiled-coil conformation. Disordered regions lie at residues 530–551 (LEQE…AENE) and 587–673 (TPLG…SQAN). Acidic residues-rich tracts occupy residues 593–605 (DNTD…DDAD) and 612–629 (GDSE…EEDA). The stretch at 617–647 (NFYDSYEGDEEDASRELERLERESAERETLD) forms a coiled coil. A compositionally biased stretch (basic and acidic residues) spans 630–673 (SRELERLERESAERETLDRLELGQRQKLQEEQHRDELHHSSQAN).

It belongs to the SHE10 family. Component of the mitochondria-localized RNase mitochondrial RNA-processing (RNase MRP) composed of one single RNA encoded by the NME1 gene and at least 31 proteins. Absent in the nucleus-localized RNase MRP (NuMRP).

The protein resides in the mitochondrion. Functionally, involved in spore wall assembly. May be a component of the mitochondrial RNase MRP (MtMRP), a ribonucleoprotein endoribonuclease involved in the cleaving RNA transcripts to generate primers for DNA replication in mitochondria. This is Outer spore wall assembly protein SHE10 from Lachancea thermotolerans (strain ATCC 56472 / CBS 6340 / NRRL Y-8284) (Yeast).